Here is an 897-residue protein sequence, read N- to C-terminus: MSIINNILSKIVGSRNDRLIKVLYKTVNQITELESNMQALSDEQLKSKTQEFKDRLNKKETLNSILIEAFAVIREASIRVLDLRHHDVQLIGGIVLNNGNIAEMGTGEGKTLVATLPAYLNALNGKGVHIVTVNDYLAFRDAQWMGKVFNFLSMSVGIITSNMSYENKQVAYLCDIVYATNNELGFDYLRDNMAFTSEQKVQRMLNFAIVDEVDSILIDEARTPLIISGPTDDYAQIYQAINHMIPHFTKQIESGAGKEIVIEVAGDYTVDEKHKQVFLTDNGHGKAERLLIDAGALLEGVSLYDASNILLMQHINSALRAHILFQKNVDYIIQNDEVVIVDEFTGRTMLGRRWSEGLHQAIEAKERVSIKKENQTLASITFQNYFRLYRTLSGMTGTADTEAVEFQDIYGLETVVVPPNKPSTRVDKSDLIYLTTQEKFKAIALEVANCQKTGQPVLVGTSSIENSELISTLLEKNNIKHEVLNAKQHEREAIIIANAGSIGAVTIATNMAGRGTDIVLGGKLLEQATNKQKIDWQNRHDDVIKAGGLHIVGTERNESRRVDNQLRGRSARQGDVGSTRFYLSLEDNLMRIFASEKMSSTMQKLGMKKGESIEHKMVNRAIENAQRKVEGMNYDARKHLLEYDDVANDQRKVIYQLRDDLMSVNDVQDRFISIREKVIKQLFSDYISAELMEEDWNVEGFYNALKSDYSVDLPLQQWLNKGVDIDELQSRIIQGMSTICDYKEETVGTKPMREFEKAVMLKTIDHYWKEHLATMDYLRQSVNLRGYAQKNPMQEYKRESFAMFTSLLDTINIEIVKSLSNVTINENTDILDVEQQNNDDAQATHSNPNEQTKQASITNNIQTQTDQQNTYQRKEKKVGRNEPCPCGSGKKYKKCHG.

Residues glutamine 89, 107–111, and aspartate 517 contribute to the ATP site; that span reads GEGKT. Residues 839-856 show a composition bias toward polar residues; sequence DDAQATHSNPNEQTKQAS. Residues 839–897 form a disordered region; it reads DDAQATHSNPNEQTKQASITNNIQTQTDQQNTYQRKEKKVGRNEPCPCGSGKKYKKCHG. The segment covering 857-870 has biased composition (low complexity); that stretch reads ITNNIQTQTDQQNT. Zn(2+) contacts are provided by cysteine 884, cysteine 886, cysteine 895, and histidine 896.

This sequence belongs to the SecA family. Monomer and homodimer. Part of the essential Sec protein translocation apparatus which comprises SecA, SecYEG and auxiliary proteins SecDF-YajC and YidC. Requires Zn(2+) as cofactor.

Its subcellular location is the cell inner membrane. It localises to the cytoplasm. The catalysed reaction is ATP + H2O + cellular proteinSide 1 = ADP + phosphate + cellular proteinSide 2.. Part of the Sec protein translocase complex. Interacts with the SecYEG preprotein conducting channel. Has a central role in coupling the hydrolysis of ATP to the transfer of proteins into and across the cell membrane, serving as an ATP-driven molecular motor driving the stepwise translocation of polypeptide chains across the membrane. This chain is Protein translocase subunit SecA, found in Vesicomyosocius okutanii subsp. Calyptogena okutanii (strain HA).